A 324-amino-acid polypeptide reads, in one-letter code: NADH-dependent D-xylose reductase (324 aa).

Residue tyrosine 54 is the Proton donor of the active site. Residue histidine 116 coordinates substrate. 220 to 286 (SSFGPQSFLE…SNSPDRMAQN (67 aa)) is a binding site for NAD(+).

This sequence belongs to the aldo/keto reductase family.

The enzyme catalyses xylitol + NAD(+) = D-xylose + NADH + H(+). The catalysed reaction is xylitol + NADP(+) = D-xylose + NADPH + H(+). It participates in carbohydrate metabolism; D-xylose degradation. Reduces D-xylose into xylitol. Preferentially utilizes NADH as a cosubstrate. This chain is NADH-dependent D-xylose reductase (XYL1), found in Candida parapsilosis (Yeast).